We begin with the raw amino-acid sequence, 69 residues long: U2-agatoxin-Ao1e (69 aa).

The N-terminal stretch at 1–20 is a signal peptide; it reads MRAIISVLLISAMVFSIIEA. The propeptide occupies 21 to 34; the sequence is VPLEEGLQLFEAER. 3 cysteine pairs are disulfide-bonded: Cys-37–Cys-53, Cys-44–Cys-58, and Cys-52–Cys-68.

It belongs to the neurotoxin 01 (U2-agtx) family. Expressed by the venom gland.

The protein localises to the secreted. Its function is as follows. Insect active toxin causing rapid but reversible paralysis in crickets. No activity shown in mammals. Does not show effect on mammalian voltage-gated calcium channels. The sequence is that of U2-agatoxin-Ao1e from Agelena orientalis (Funnel-web spider).